Here is a 178-residue protein sequence, read N- to C-terminus: Dual-action ribosomal maturation protein DarP (178 aa).

Belongs to the DarP family.

The protein localises to the cytoplasm. In terms of biological role, member of a network of 50S ribosomal subunit biogenesis factors which assembles along the 30S-50S interface, preventing incorrect 23S rRNA structures from forming. Promotes peptidyl transferase center (PTC) maturation. This is Dual-action ribosomal maturation protein DarP from Haemophilus influenzae (strain PittEE).